The following is a 448-amino-acid chain: Phosphoglucosamine mutase (448 aa).

Catalysis depends on S104, which acts as the Phosphoserine intermediate. Mg(2+)-binding residues include S104, D241, D243, and D245. Phosphoserine is present on S104.

This sequence belongs to the phosphohexose mutase family. Mg(2+) serves as cofactor. Post-translationally, activated by phosphorylation.

It carries out the reaction alpha-D-glucosamine 1-phosphate = D-glucosamine 6-phosphate. In terms of biological role, catalyzes the conversion of glucosamine-6-phosphate to glucosamine-1-phosphate. This chain is Phosphoglucosamine mutase, found in Nocardioides sp. (strain ATCC BAA-499 / JS614).